Reading from the N-terminus, the 178-residue chain is Bifunctional protein PyrR (178 aa).

Residues 42 to 43, arginine 83, 103 to 111, arginine 136, and valine 160 contribute to the substrate site; these read TR and DDVIYKGRT. Residues 99-111 carry the PRPP-binding motif; it reads VVLVDDVIYKGRT.

This sequence belongs to the purine/pyrimidine phosphoribosyltransferase family. PyrR subfamily.

The catalysed reaction is UMP + diphosphate = 5-phospho-alpha-D-ribose 1-diphosphate + uracil. Regulates the transcription of the pyrimidine nucleotide (pyr) operon in response to exogenous pyrimidines. In terms of biological role, also displays a weak uracil phosphoribosyltransferase activity which is not physiologically significant. This Synechocystis sp. (strain ATCC 27184 / PCC 6803 / Kazusa) protein is Bifunctional protein PyrR.